Reading from the N-terminus, the 207-residue chain is Holliday junction branch migration complex subunit RuvA (207 aa).

The domain I stretch occupies residues 1 to 64 (MIGLISGQVQ…EDAQLLYGFI (64 aa)). A domain II region spans residues 65–143 (DRKERDVFRQ…NIEVDNSNLE (79 aa)). Positions 144–152 (FAIQPAPIS) are flexible linker. The tract at residues 153-207 (AEDSIIAEVEGALMSLGYKEKEAQQAIKAAKSNGETFADTQSLLKATLQQFQSFK) is domain III.

Belongs to the RuvA family. As to quaternary structure, homotetramer. Forms an RuvA(8)-RuvB(12)-Holliday junction (HJ) complex. HJ DNA is sandwiched between 2 RuvA tetramers; dsDNA enters through RuvA and exits via RuvB. An RuvB hexamer assembles on each DNA strand where it exits the tetramer. Each RuvB hexamer is contacted by two RuvA subunits (via domain III) on 2 adjacent RuvB subunits; this complex drives branch migration. In the full resolvosome a probable DNA-RuvA(4)-RuvB(12)-RuvC(2) complex forms which resolves the HJ.

It localises to the cytoplasm. Functionally, the RuvA-RuvB-RuvC complex processes Holliday junction (HJ) DNA during genetic recombination and DNA repair, while the RuvA-RuvB complex plays an important role in the rescue of blocked DNA replication forks via replication fork reversal (RFR). RuvA specifically binds to HJ cruciform DNA, conferring on it an open structure. The RuvB hexamer acts as an ATP-dependent pump, pulling dsDNA into and through the RuvAB complex. HJ branch migration allows RuvC to scan DNA until it finds its consensus sequence, where it cleaves and resolves the cruciform DNA. This chain is Holliday junction branch migration complex subunit RuvA, found in Psychrobacter arcticus (strain DSM 17307 / VKM B-2377 / 273-4).